Here is a 629-residue protein sequence, read N- to C-terminus: tRNA uridine 5-carboxymethylaminomethyl modification enzyme MnmG (629 aa).

FAD-binding positions include 14 to 19 (GAGHAG), valine 126, and serine 181. Position 273 to 287 (273 to 287 (GPRYCPSIEDKVVRF)) interacts with NAD(+). FAD is bound at residue glutamine 370.

It belongs to the MnmG family. In terms of assembly, homodimer. Heterotetramer of two MnmE and two MnmG subunits. The cofactor is FAD.

The protein resides in the cytoplasm. In terms of biological role, NAD-binding protein involved in the addition of a carboxymethylaminomethyl (cmnm) group at the wobble position (U34) of certain tRNAs, forming tRNA-cmnm(5)s(2)U34. This chain is tRNA uridine 5-carboxymethylaminomethyl modification enzyme MnmG, found in Bacillus mycoides (strain KBAB4) (Bacillus weihenstephanensis).